The following is a 189-amino-acid chain: Pyridoxal 5'-phosphate synthase subunit PdxT (189 aa).

Residue 47–49 coordinates L-glutamine; that stretch reads GES. C79 acts as the Nucleophile in catalysis. L-glutamine is bound by residues R106 and 135-136; that span reads IR. Catalysis depends on charge relay system residues H171 and E173.

This sequence belongs to the glutaminase PdxT/SNO family. In terms of assembly, in the presence of PdxS, forms a dodecamer of heterodimers. Only shows activity in the heterodimer.

The enzyme catalyses aldehydo-D-ribose 5-phosphate + D-glyceraldehyde 3-phosphate + L-glutamine = pyridoxal 5'-phosphate + L-glutamate + phosphate + 3 H2O + H(+). It catalyses the reaction L-glutamine + H2O = L-glutamate + NH4(+). Its pathway is cofactor biosynthesis; pyridoxal 5'-phosphate biosynthesis. Catalyzes the hydrolysis of glutamine to glutamate and ammonia as part of the biosynthesis of pyridoxal 5'-phosphate. The resulting ammonia molecule is channeled to the active site of PdxS. The polypeptide is Pyridoxal 5'-phosphate synthase subunit PdxT (Desulforudis audaxviator (strain MP104C)).